We begin with the raw amino-acid sequence, 217 residues long: ATP phosphoribosyltransferase (217 aa).

Belongs to the ATP phosphoribosyltransferase family. Short subfamily. Heteromultimer composed of HisG and HisZ subunits.

It is found in the cytoplasm. The enzyme catalyses 1-(5-phospho-beta-D-ribosyl)-ATP + diphosphate = 5-phospho-alpha-D-ribose 1-diphosphate + ATP. It participates in amino-acid biosynthesis; L-histidine biosynthesis; L-histidine from 5-phospho-alpha-D-ribose 1-diphosphate: step 1/9. Functionally, catalyzes the condensation of ATP and 5-phosphoribose 1-diphosphate to form N'-(5'-phosphoribosyl)-ATP (PR-ATP). Has a crucial role in the pathway because the rate of histidine biosynthesis seems to be controlled primarily by regulation of HisG enzymatic activity. This chain is ATP phosphoribosyltransferase, found in Synechococcus sp. (strain WH7803).